The following is a 145-amino-acid chain: UPF0201 protein STK_09490 (145 aa).

The protein belongs to the UPF0201 family.

The sequence is that of UPF0201 protein STK_09490 from Sulfurisphaera tokodaii (strain DSM 16993 / JCM 10545 / NBRC 100140 / 7) (Sulfolobus tokodaii).